Reading from the N-terminus, the 159-residue chain is 2-C-methyl-D-erythritol 2,4-cyclodiphosphate synthase (159 aa).

A divalent metal cation contacts are provided by Asp8 and His10. 4-CDP-2-C-methyl-D-erythritol 2-phosphate-binding positions include 8–10 and 34–35; these read DVH and HS. His42 serves as a coordination point for a divalent metal cation. Residues 56-58, 61-65, 100-106, 132-135, Phe139, and Arg142 each bind 4-CDP-2-C-methyl-D-erythritol 2-phosphate; these read DIG, FPDTD, AQAPKML, and TTTE.

This sequence belongs to the IspF family. Homotrimer. Requires a divalent metal cation as cofactor.

The enzyme catalyses 4-CDP-2-C-methyl-D-erythritol 2-phosphate = 2-C-methyl-D-erythritol 2,4-cyclic diphosphate + CMP. The protein operates within isoprenoid biosynthesis; isopentenyl diphosphate biosynthesis via DXP pathway; isopentenyl diphosphate from 1-deoxy-D-xylulose 5-phosphate: step 4/6. Its function is as follows. Involved in the biosynthesis of isopentenyl diphosphate (IPP) and dimethylallyl diphosphate (DMAPP), two major building blocks of isoprenoid compounds. Catalyzes the conversion of 4-diphosphocytidyl-2-C-methyl-D-erythritol 2-phosphate (CDP-ME2P) to 2-C-methyl-D-erythritol 2,4-cyclodiphosphate (ME-CPP) with a corresponding release of cytidine 5-monophosphate (CMP). This chain is 2-C-methyl-D-erythritol 2,4-cyclodiphosphate synthase, found in Klebsiella pneumoniae (strain 342).